A 921-amino-acid chain; its full sequence is Valine--tRNA ligase (921 aa).

The 'HIGH' region signature appears at 40–50 (PNVTGSLHMGH). The short motif at 522–526 (KMSKS) is the 'KMSKS' region element. ATP is bound at residue lysine 525. The stretch at 849-921 (MADLIDKEAE…LQHKNRIESL (73 aa)) forms a coiled coil.

This sequence belongs to the class-I aminoacyl-tRNA synthetase family. ValS type 1 subfamily. Monomer.

Its subcellular location is the cytoplasm. It catalyses the reaction tRNA(Val) + L-valine + ATP = L-valyl-tRNA(Val) + AMP + diphosphate. In terms of biological role, catalyzes the attachment of valine to tRNA(Val). As ValRS can inadvertently accommodate and process structurally similar amino acids such as threonine, to avoid such errors, it has a 'posttransfer' editing activity that hydrolyzes mischarged Thr-tRNA(Val) in a tRNA-dependent manner. In Legionella pneumophila (strain Lens), this protein is Valine--tRNA ligase.